A 340-amino-acid chain; its full sequence is Outer membrane protein B (340 aa).

A signal peptide spans 1-26; that stretch reads MSSKLVNYLRLTFLSFLGIASTSLDA.

Belongs to the chlamydial OMP family.

It is found in the cell outer membrane. The polypeptide is Outer membrane protein B (ompB) (Chlamydia trachomatis serovar D (strain ATCC VR-885 / DSM 19411 / UW-3/Cx)).